The chain runs to 129 residues: Glycine cleavage system H protein (129 aa).

The Lipoyl-binding domain maps to 24 to 106; that stretch reads LVRVGLSAYA…HGEGWLLVIR (83 aa). At lysine 65 the chain carries N6-lipoyllysine.

It belongs to the GcvH family. As to quaternary structure, the glycine cleavage system is composed of four proteins: P, T, L and H. (R)-lipoate serves as cofactor.

In terms of biological role, the glycine cleavage system catalyzes the degradation of glycine. The H protein shuttles the methylamine group of glycine from the P protein to the T protein. This is Glycine cleavage system H protein from Synechococcus sp. (strain CC9311).